The primary structure comprises 807 residues: AP-5 complex subunit zeta-1 (807 aa).

Probably part of the adaptor protein complex 5 (AP-5) a tetramer composed of AP5B1, AP5M1, AP5S1 and AP5Z1. Interacts with ZFYVE26 and SPG11.

It localises to the cytoplasm. It is found in the nucleus. Its function is as follows. As part of AP-5, a probable fifth adaptor protein complex it may be involved in endosomal transport. The polypeptide is AP-5 complex subunit zeta-1 (Ap5z1) (Mus musculus (Mouse)).